We begin with the raw amino-acid sequence, 445 residues long: MLGNLGENLTKTMKKLVGISVIDKKTIEEVVKEIQRALIQSDVNIALVLDLSKKIKKRALEEEPPKGITPREHVITIIYEEMVNLLGGEAPGLDIDVKPYKILFLGLQGSGKTTTIGKLCRYLQKKGFNPAVVCTDTWRPAAYEQLRQLTEEMQVPLYGDPDNKDALDLAQKGLKEFKNRKVIIFDTAGRHKQEEDLIAEMDTLDDIIQPTESILVIDGTIGQQAGEQAKAFSQATDVGSIIITKLDGSAKGGGAMSAVAETGAPIKFIGTGERIDDFELFDPARFISRLLGMGDIQTLIEKAEDSIDEDMAEKTMKNMMSGKFTLVDMKNQFEMMNSMGPMQQVLSMIPGLGNKVSKEASKMTEDKIDGYKVIMSSMTKKEMENPKLIKQSRIRRIAMGAGVEESEVRDLLKYYNNTKKTMKGIGKRGRFGNNSMNRMMGQFMK.

GTP-binding positions include 106–113 (GLQGSGKT), 186–190 (DTAGR), and 244–247 (TKLD).

Belongs to the GTP-binding SRP family. SRP54 subfamily. Part of the signal recognition particle protein translocation system, which is composed of SRP and FtsY. Archaeal SRP consists of a 7S RNA molecule of 300 nucleotides and two protein subunits: SRP54 and SRP19.

The protein localises to the cytoplasm. It catalyses the reaction GTP + H2O = GDP + phosphate + H(+). Involved in targeting and insertion of nascent membrane proteins into the cytoplasmic membrane. Binds to the hydrophobic signal sequence of the ribosome-nascent chain (RNC) as it emerges from the ribosomes. The SRP-RNC complex is then targeted to the cytoplasmic membrane where it interacts with the SRP receptor FtsY. This is Signal recognition particle 54 kDa protein from Methanobrevibacter smithii (strain ATCC 35061 / DSM 861 / OCM 144 / PS).